We begin with the raw amino-acid sequence, 84 residues long: U8-theraphotoxin-Hhn1c 2 (84 aa).

A signal peptide spans methionine 1 to cysteine 21. Cystine bridges form between cysteine 23–cysteine 35, cysteine 29–cysteine 44, cysteine 34–cysteine 67, cysteine 54–cysteine 75, and cysteine 69–cysteine 81.

Belongs to the AVIT (prokineticin) family. Expressed by the venom gland.

Its subcellular location is the secreted. The chain is U8-theraphotoxin-Hhn1c 2 from Cyriopagopus hainanus (Chinese bird spider).